The sequence spans 259 residues: MSFKRPCPLARYNRTSYFYPTFSESSEHSHLLVSPVLVASAVIGVVIILSCITIIVGSIRRDRQARLQRHRHRHHRHHHHHHHHRRRRHREYEHGYVSDEHTYSRSSRRMRYACSSSEDWPPPLDISSDGDVDATVLRELYPDSPPGYEECVGPGATQLYVPTDAPPPYSLTDSCPTLDGTSDSGSGHSPGRHQQEQRTPAQGGLHTVSMDTLPPYEAVCGAGPPSGLLPLPGPDPGPRGSQGSPTPTRAPASGPERIV.

Residues 36 to 56 (VLVASAVIGVVIILSCITIIV) form a helical membrane-spanning segment. Residues 71-89 (RHRHHRHHHHHHHHRRRRH) show a composition bias toward basic residues. Disordered stretches follow at residues 71 to 91 (RHRH…RHRE) and 152 to 259 (VGPG…ERIV). Residues 171-187 (LTDSCPTLDGTSDSGSG) show a composition bias toward polar residues. The segment covering 221–230 (GAGPPSGLLP) has biased composition (low complexity).

In terms of assembly, interacts with NEDD4.

It localises to the membrane. This chain is Protein BEAN1 (BEAN1), found in Homo sapiens (Human).